The primary structure comprises 243 residues: Thaumatin-like protein (243 aa).

An N-terminal signal peptide occupies residues 1–20; it reads MASINLFLFAFLLLLSHASA. 8 disulfide bridges follow: Cys-29-Cys-238, Cys-77-Cys-87, Cys-92-Cys-98, Cys-144-Cys-228, Cys-149-Cys-211, Cys-157-Cys-174, Cys-178-Cys-187, and Cys-188-Cys-198.

The protein belongs to the thaumatin family.

The protein is Thaumatin-like protein of Arabidopsis thaliana (Mouse-ear cress).